We begin with the raw amino-acid sequence, 315 residues long: Olfactory receptor 3A1 (315 aa).

Over 1-28 the chain is Extracellular; sequence MQPESGANGTVIAEFILLGLLEAPGLQP. N8 carries an N-linked (GlcNAc...) asparagine glycan. A helical membrane pass occupies residues 29–52; that stretch reads VVFVLFLFAYLVTVRGNLSILAAV. At 53–60 the chain is on the cytoplasmic side; the sequence is LVEPKLHT. Residues 61-82 form a helical membrane-spanning segment; sequence PMYFFLGNLSVLDVGCISVTVP. Over 83 to 103 the chain is Extracellular; the sequence is SMLSRLLSRKRAVPCGACLTQ. An intrachain disulfide couples C100 to C192. The helical transmembrane segment at 104-123 threads the bilayer; the sequence is LFFFHLFVGVDCFLLTAMAY. Over 124–143 the chain is Cytoplasmic; it reads DRFLAICRPLTYSTRMSQTV. A helical membrane pass occupies residues 144–161; that stretch reads QRMLVAASWACAFTNALT. Residues 162-199 lie on the Extracellular side of the membrane; sequence HTVAMSTLNFCGPNVINHFYCDLPQLFQLSCSSTQLNE. A helical membrane pass occupies residues 200–223; the sequence is LLLFAVGFIMAGTPMALIVISYIH. At 224 to 240 the chain is on the cytoplasmic side; it reads VAAAVLRIRSVEGRKKA. Residues 241–264 traverse the membrane as a helical segment; sequence FSTCGSHLTVVAIFYGSGIFNYMR. Over 265–275 the chain is Extracellular; that stretch reads LGSTKLSDKDK. A helical membrane pass occupies residues 276-295; the sequence is AVGIFNTVINPMLNPIIYSF. Residues 296–315 lie on the Cytoplasmic side of the membrane; sequence RNPDVQSAIWRMLTGRRSLA.

Belongs to the G-protein coupled receptor 1 family.

The protein resides in the cell membrane. Functionally, odorant receptor. In Homo sapiens (Human), this protein is Olfactory receptor 3A1 (OR3A1).